The primary structure comprises 444 residues: Killer cell immunoglobulin-like receptor 3DL1 (444 aa).

Residues 1-21 form the signal peptide; the sequence is MSLMVVSMACVGLFLVQRAGP. Topologically, residues 22-340 are extracellular; the sequence is HMGGQDKPFL…SKSGNPRHLH (319 aa). Ig-like C2-type domains are found at residues 42–102, 137–202, and 237–300; these read GGHV…HPHS, GERV…VTHT, and GESV…FRHS. Disulfide bonds link Cys-49–Cys-95, Cys-144–Cys-195, and Cys-244–Cys-293. N-linked (GlcNAc...) asparagine glycans are attached at residues Asn-92, Asn-179, and Asn-273. Residues 315-334 form a disordered region; that stretch reads VTGNPSSSWPSPTEPSSKSG. The span at 319 to 333 shows a compositional bias: low complexity; sequence PSSSWPSPTEPSSKS. A helical transmembrane segment spans residues 341 to 360; the sequence is ILIGTSVVIILFILLLFFLL. Over 361–444 the chain is Cytoplasmic; sequence HLWCSNKKNA…KPRSKVVSCP (84 aa). Disordered regions lie at residues 375–394 and 409–444; these read QEPAGNRTANSEDSDEQDPE and RKITRPSQRPKTPPTDTILYTELPNAKPRSKVVSCP.

Belongs to the immunoglobulin superfamily.

It is found in the cell membrane. Its function is as follows. Receptor on natural killer (NK) cells for HLA Bw4 allele. Inhibits the activity of NK cells thus preventing cell lysis. The sequence is that of Killer cell immunoglobulin-like receptor 3DL1 from Homo sapiens (Human).